Here is a 476-residue protein sequence, read N- to C-terminus: Proline--tRNA ligase (476 aa).

This sequence belongs to the class-II aminoacyl-tRNA synthetase family. ProS type 3 subfamily. As to quaternary structure, homodimer.

The protein resides in the cytoplasm. It catalyses the reaction tRNA(Pro) + L-proline + ATP = L-prolyl-tRNA(Pro) + AMP + diphosphate. Functionally, catalyzes the attachment of proline to tRNA(Pro) in a two-step reaction: proline is first activated by ATP to form Pro-AMP and then transferred to the acceptor end of tRNA(Pro). In Mycoplasma mobile (strain ATCC 43663 / 163K / NCTC 11711) (Mesomycoplasma mobile), this protein is Proline--tRNA ligase.